A 359-amino-acid chain; its full sequence is MNKERYIGIMSGTSLDGVDVVLCEIDKKSCLLKASVEYPFPDDLKKEILSMINGKCTLAQVGSVDVRLGILFSDAVNALLEIEKIDPKSIKAIGSHGQTLWHEPVGKYPFSMQLGDPSAIAVRTGIKVVADFRQKDMALGGQGAPFAPAFHAFLFGGTDASVSILNIGGMANITVLGKTLLGYDTGPGNVLMDMWVAEHKDVTYDRNGEWARSGEVIYPLLEAMLEDPYFSQPHPKSTGREKFNEAWLQKHLNAQHSTLNAHDVQRTLLELTAVSISNEVLKFNQDILLLCGGGAKNAFLVERLGTLMPNIQIGIANDADNIEAMTFAWLAYKRLHNEHVDLKDVTGARQNAILGGVYV.

12 to 19 (GTSLDGVD) provides a ligand contact to ATP.

Belongs to the anhydro-N-acetylmuramic acid kinase family.

The enzyme catalyses 1,6-anhydro-N-acetyl-beta-muramate + ATP + H2O = N-acetyl-D-muramate 6-phosphate + ADP + H(+). The protein operates within amino-sugar metabolism; 1,6-anhydro-N-acetylmuramate degradation. It participates in cell wall biogenesis; peptidoglycan recycling. Functionally, catalyzes the specific phosphorylation of 1,6-anhydro-N-acetylmuramic acid (anhMurNAc) with the simultaneous cleavage of the 1,6-anhydro ring, generating MurNAc-6-P. Is required for the utilization of anhMurNAc either imported from the medium or derived from its own cell wall murein, and thus plays a role in cell wall recycling. The protein is Anhydro-N-acetylmuramic acid kinase of Sulfurovum sp. (strain NBC37-1).